An 874-amino-acid polypeptide reads, in one-letter code: Alanine--tRNA ligase (874 aa).

Residues His-562, His-566, Cys-664, and His-668 each coordinate Zn(2+).

This sequence belongs to the class-II aminoacyl-tRNA synthetase family. Requires Zn(2+) as cofactor.

The protein localises to the cytoplasm. It catalyses the reaction tRNA(Ala) + L-alanine + ATP = L-alanyl-tRNA(Ala) + AMP + diphosphate. Functionally, catalyzes the attachment of alanine to tRNA(Ala) in a two-step reaction: alanine is first activated by ATP to form Ala-AMP and then transferred to the acceptor end of tRNA(Ala). Also edits incorrectly charged Ser-tRNA(Ala) and Gly-tRNA(Ala) via its editing domain. In Shewanella woodyi (strain ATCC 51908 / MS32), this protein is Alanine--tRNA ligase.